The following is a 408-amino-acid chain: MTEKVKRVVLAYSGGLDTSVILKWLQEHYGCEVVTFTADLGQGEELEPARKKAEMMGIKPEHIFMDDLREEFVRDFVFPMMRANALYEGQYLLGTSIARPLIAKRQIEIARQVGADAVAHGATGKGNDQIRFELGYYALAPDIKVIAPWREWDLNSRSKLIAYAESRQIAVPKDKRGESPFSVDSNLLHTSSEGKILEDPWQEVPDYVYSRTVNPEDAPNTPEIITIDFERGDAIAINGEALSPAELLTKLNELGRKHGIGRLDLVENRYIGMKSRGMYETPGGTILIQAHRGIEQLTLDGGAMHLKDELMPRYAELIYNGFWYSPEREMLQAAIDHSQARVSGTVRLKLYKGSVNVIGRKSPNSLYSEKVVTFEDDAGAYNQQDAAGFIKLNALRLRLLGERNAKGL.

Residues 11 to 19 and Ala38 each bind ATP; that span reads AYSGGLDTS. Residues Tyr91 and Ser96 each contribute to the L-citrulline site. Gly121 contacts ATP. Residues Thr123, Asn127, and Asp128 each coordinate L-aspartate. Residue Asn127 coordinates L-citrulline. Residues Arg131, Ser182, Ser191, Glu267, and Tyr279 each coordinate L-citrulline.

It belongs to the argininosuccinate synthase family. Type 1 subfamily. Homotetramer.

It localises to the cytoplasm. It catalyses the reaction L-citrulline + L-aspartate + ATP = 2-(N(omega)-L-arginino)succinate + AMP + diphosphate + H(+). It functions in the pathway amino-acid biosynthesis; L-arginine biosynthesis; L-arginine from L-ornithine and carbamoyl phosphate: step 2/3. This is Argininosuccinate synthase from Zymomonas mobilis subsp. mobilis (strain ATCC 31821 / ZM4 / CP4).